A 353-amino-acid chain; its full sequence is Jasmonate-induced oxygenase 4 (353 aa).

A Fe2OG dioxygenase domain is found at 202–302 (VGASLRTNFY…RVSLAFFYNP (101 aa)). Arg207 contributes to the jasmonate binding site. 2-oxoglutarate is bound by residues Asn209 and Tyr211. Fe cation is bound by residues His226, Asp228, and His283. 2 residues coordinate 2-oxoglutarate: Arg293 and Ser295. 2 residues coordinate jasmonate: Arg332 and Arg336.

This sequence belongs to the iron/ascorbate-dependent oxidoreductase family. It depends on L-ascorbate as a cofactor. The cofactor is Fe(2+).

It carries out the reaction jasmonate + 2-oxoglutarate + O2 = (1R,2R)-12-hydroxyjasmonate + succinate + CO2. 2-oxoglutarate-dependent dioxygenase involved in the oxidation of jasmonate (JA), a stress-induced phytohormone synthesized in response to attack by pathogens and herbivores, which triggers the activation of defense responses via the JA-mediated signaling pathway. Converts JA to 12-hydroxyjasmonate (12OH-JA), an inactive form of JA. Is specific to free JA, and cannot oxidize the bioactive form jasmonoyl-L-isoleucine (JA-Ile) or other JA-amino acid conjugates. Prevents over-accumulation of JA and indirectly its bioactive form JA-Ile under stress response. Acts as a negative regulator of JA-mediated defense signaling, by contributing to 12OH-JA accumulation, which represses JA defense responses upon infection by the fungal pathogen Botrytis cinerea. Acts as a negative regulator of JA-mediated defense responses upon infestation by the herbivorous caterpillar Mamestra brassicae. This chain is Jasmonate-induced oxygenase 4, found in Arabidopsis thaliana (Mouse-ear cress).